Reading from the N-terminus, the 538-residue chain is Tetracenomycin C resistance and export protein (538 aa).

14 consecutive transmembrane segments (helical) span residues 28–48 (LLAVAVGVMMVALDSTIVAIA), 65–85 (WITNGYLLALAVSLITAGKLG), 100–120 (GFAVTSAAIGLSGSVAAIVVF), 126–146 (LFGALMQPSALGLLRVTFPPG), 154–174 (IWSGVVGASTAAGPIIGGLLV), 181–201 (AVFFINVPVGLAALVAGLVIL), 213–233 (FDVSGIVLLSGAMFCLVWGLI), 239–259 (GWGDLRTLGFLAAAVLAFAGF), 286–306 (VLMVLMAFSFIGGLFFVTFYL), 319–339 (VHLLPLTGMMIVGAPVSGIVI), 342–362 (FGPGGPLVVGMLLTAASLWGM), 371–391 (MGITSLWFVLLGLGLAPVMVG), 413–433 (QSAMQVGGSLGTAVLGVLMAS), and 494–514 (MGLAFTVAGAVALVAAAVALF).

This sequence belongs to the major facilitator superfamily. EmrB family.

It is found in the cell membrane. It functions in the pathway antibiotic biosynthesis; tetracenomycin C biosynthesis. Resistance to tetracenomycin C by an active tetracenomycin C efflux system which is probably energized by transmembrane electrochemical gradients. The polypeptide is Tetracenomycin C resistance and export protein (tcmA) (Streptomyces glaucescens).